A 185-amino-acid polypeptide reads, in one-letter code: UPF0301 protein PSHAa2600 (185 aa).

This sequence belongs to the UPF0301 (AlgH) family.

In Pseudoalteromonas translucida (strain TAC 125), this protein is UPF0301 protein PSHAa2600.